A 286-amino-acid chain; its full sequence is Alpha/beta-gliadin (286 aa).

Residues 1–20 form the signal peptide; the sequence is MKTFLILVLLAIVATTATTA. The tract at residues 51 to 120 is disordered; sequence LGQQQPFPPQ…QQPISQQQQQ (70 aa). The segment covering 56 to 71 has biased composition (pro residues); it reads PFPPQQPYPQPQPFPS. Low complexity predominate over residues 72–92; sequence QLPYLQLQPFPQPQLPYSQPQ. Positions 93–104 are enriched in pro residues; it reads PFRPQQPYPQPQ. Residues 105–120 show a composition bias toward low complexity; sequence PQYSQPQQPISQQQQQ.

This sequence belongs to the gliadin/glutenin family. In terms of processing, substrate of transglutaminase.

Gliadin is the major seed storage protein in wheat. The polypeptide is Alpha/beta-gliadin (Triticum aestivum (Wheat)).